A 315-amino-acid polypeptide reads, in one-letter code: Cobalamin biosynthesis protein CobD (315 aa).

Transmembrane regions (helical) follow at residues 54–74 (GLLF…ILFL), 78–98 (IAYW…LAMT), 152–172 (ADGV…LALM), 203–223 (IANF…SFIL), and 295–315 (LLYM…LLLF).

It belongs to the CobD/CbiB family.

It is found in the cell membrane. It functions in the pathway cofactor biosynthesis; adenosylcobalamin biosynthesis. Functionally, converts cobyric acid to cobinamide by the addition of aminopropanol on the F carboxylic group. The sequence is that of Cobalamin biosynthesis protein CobD from Listeria monocytogenes serovar 1/2a (strain ATCC BAA-679 / EGD-e).